A 366-amino-acid polypeptide reads, in one-letter code: Terpene cyclase-like protein flvF (366 aa).

Belongs to the terpene synthase family. As to quaternary structure, homodimer.

The enzyme catalyses N,N-dimethyl-cadaverine + 2,6,9-trimethyl-13-oxatetracyclo[6.3.1.1(6,9).0(1,5)]tridecane carbocation = pre-flavunoidine + H(+). It participates in secondary metabolite biosynthesis; terpenoid biosynthesis. Its function is as follows. Terpene cyclase-like protein; part of the gene cluster that mediates the biosynthesis of flavunoidine, an alkaloidal terpenoid with a tetracyclic cage-like core connected to dimethylcadaverine via a C-N bond and acylated with 5,5-dimethyl-L-pipecolate. The tetracyclic core is synthesized by the terpene cyclase flvE and the cytochrome P450 monooxygenase flvD. The terpene cyclase flvE catalyzes the cyclization of farnesyl pyrophosphate (FPP) to form (1R,4R,5S)-(+)-acoradiene and the cytochrome P450 monooxygenase flvD is then responsible for oxidative conversion of (1R,4R,5S)-(+)-acoradiene into the tetracyclic cage present in the final product flavunoidine. In parallel, the N-methyltransferase flvH dimethylates L-lysine to give N,N-dimethyl-L-Lysin which is decarboxylated by flvG to afford dimethylcadaverine. The terpene cyclase-like protein flvF is the enzyme that attaches the dimethylcadaverine precusor at the C-7 of the tetracyclic cage to yield pre-flavunoidine. The cytochrome monooxygenase flvC hydroxylates the C-10 position of pre-flavunoidine whereas the NRPS flvI acylates the terpenoid core at the hydroxylated C-10 with dimethylpipecolate to yield final flavunoidine. The bifunctional enzyme flvA and the dehydrogenase flvB are responsible for the synthesis of the dimethylpipecolate precursor. The PLP-dependent lyase domain of flvA might use L-O-acetyl-homoserine and alpha-keto-isovalerate to form an intermediary ketone that can cyclize intramolecularly to yield an imine. The imine can be reduced by flvB to yield the 6-carboxylated pipecolate. The C-terminal alpha-KG-dependent oxygenase domain of flvA is then proposed to catalyze the decarboxylation to yield dimethylpipecolate. This is Terpene cyclase-like protein flvF from Aspergillus flavus (strain ATCC 200026 / FGSC A1120 / IAM 13836 / NRRL 3357 / JCM 12722 / SRRC 167).